Consider the following 369-residue polypeptide: Cytoplasmic tRNA 2-thiolation protein 1 (369 aa).

It belongs to the TtcA family. CTU1/NCS6/ATPBD3 subfamily.

It localises to the cytoplasm. It participates in tRNA modification; 5-methoxycarbonylmethyl-2-thiouridine-tRNA biosynthesis. Plays a central role in 2-thiolation of mcm(5)S(2)U at tRNA wobble positions of tRNA(Lys), tRNA(Glu) and tRNA(Gln). Directly binds tRNAs and probably acts by catalyzing adenylation of tRNAs, an intermediate required for 2-thiolation. It is unclear whether it acts as a sulfurtransferase that transfers sulfur from thiocarboxylated URM1 onto the uridine of tRNAs at wobble position. Prior mcm(5) tRNA modification by the elongator complex is required for 2-thiolation. May also be involved in protein urmylation. The protein is Cytoplasmic tRNA 2-thiolation protein 1 of Cryptococcus neoformans var. neoformans serotype D (strain JEC21 / ATCC MYA-565) (Filobasidiella neoformans).